Here is a 279-residue protein sequence, read N- to C-terminus: Protein NipSnap homolog 1 (279 aa).

The protein belongs to the NipSnap family.

Its subcellular location is the mitochondrion matrix. In terms of biological role, protein involved in mitophagy. Accumulates on the mitochondria surface in response to mitochondrial depolarization and acts as a 'eat me' signal by recruiting proteins involved in selective autophagy. This chain is Protein NipSnap homolog 1, found in Danio rerio (Zebrafish).